The primary structure comprises 244 residues: uncharacterized protein (244 aa).

One can recognise an FCP1 homology domain in the interval 19 to 196 (ATDNRKLVIL…ACVIRYLKHL (178 aa)).

This is an uncharacterized protein from Schizosaccharomyces pombe (strain 972 / ATCC 24843) (Fission yeast).